The chain runs to 103 residues: Histone H4 (103 aa).

The segment covering 1 to 14 (MSGRGKGGKGLGKG) has biased composition (gly residues). The disordered stretch occupies residues 1 to 20 (MSGRGKGGKGLGKGGAKRHR). Position 2 is an N-acetylserine (Ser2). Residue Lys17 is modified to N6-acetyllysine. Residues 17–21 (KRHRR) mediate DNA binding. At Lys80 the chain carries N6-methylated lysine.

It belongs to the histone H4 family. In terms of assembly, the nucleosome is a histone octamer containing two molecules each of H2A, H2B, H3 and H4 assembled in one H3-H4 heterotetramer and two H2A-H2B heterodimers. The octamer wraps approximately 147 bp of DNA.

The protein localises to the nucleus. It localises to the chromosome. Its function is as follows. Core component of nucleosome. Nucleosomes wrap and compact DNA into chromatin, limiting DNA accessibility to the cellular machineries which require DNA as a template. Histones thereby play a central role in transcription regulation, DNA repair, DNA replication and chromosomal stability. DNA accessibility is regulated via a complex set of post-translational modifications of histones, also called histone code, and nucleosome remodeling. The polypeptide is Histone H4 (Olisthodiscus luteus (Marine phytoflagellate)).